A 74-amino-acid polypeptide reads, in one-letter code: Consomatin Gh1 (74 aa).

A signal peptide spans 1-22 (MQTACWVMVMMMVWITAPLSEG). Residues 23–57 (GKLNDVIRGLVPDDVTPQLILRSLFFHRPSDSVVR) constitute a propeptide that is removed on maturation. Cysteines 65 and 70 form a disulfide. W67 carries the post-translational modification D-tryptophan. 4-hydroxyproline occurs at positions 71, 72, and 74.

This sequence belongs to the conotoxin C superfamily. Consomatin family. In terms of tissue distribution, expressed by the venom duct.

The protein resides in the secreted. Functionally, moderately activates human somatostatin receptors (SSTR) with a preferential activation of SSTR1 and SSTR4. In vivo, does not cause behavioral changes in mice within a few minutes of intracranial injection, but causes a progressive loss of movement thereafter. Four to five hours after injection, mice recover, even with the highest dose tested. Shows antinociception and antihyperalgesia activities in two mouse models of acute pain, most probably by acting outside the central nervous system. This chain is Consomatin Gh1, found in Conus grahami (Cone snail).